A 484-amino-acid chain; its full sequence is Hexokinase-1 (484 aa).

The Hexokinase domain maps to 25 to 465 (KTLQDHLDEL…SGVGAALVSA (441 aa)). A hexokinase small subdomain region spans residues 79–212 (DGNEHGSYLA…CNNVRLNAIL (134 aa)). An ATP-binding site is contributed by 90-95 (DLGGTN). Substrate-binding positions include 160-161 (SY), 177-178 (TK), and 213-214 (SD). The tract at residues 213 to 454 (SDTTGTLVAS…SKVVTIPAED (242 aa)) is hexokinase large subdomain. An ATP-binding site is contributed by Thr237. Asn240, Glu269, and Glu302 together coordinate substrate. ATP contacts are provided by residues 307–308 (GC), 344–348 (TSVLS), and 419–423 (SVYNL).

Belongs to the hexokinase family. As to quaternary structure, monomer.

It carries out the reaction a D-hexose + ATP = a D-hexose 6-phosphate + ADP + H(+). The enzyme catalyses D-mannose + ATP = D-mannose 6-phosphate + ADP + H(+). The catalysed reaction is D-fructose + ATP = D-fructose 6-phosphate + ADP + H(+). It catalyses the reaction D-glucose + ATP = D-glucose 6-phosphate + ADP + H(+). The protein operates within carbohydrate metabolism; hexose metabolism. It functions in the pathway carbohydrate degradation; glycolysis; D-glyceraldehyde 3-phosphate and glycerone phosphate from D-glucose: step 1/4. Catalyzes the phosphorylation of hexose (six-carbon sugars) to hexose 6-phosphate. Phosphorylates D-fructose, D-mannose and, to a lower extent, D-glucose. Compared to hxk2, has low affinity for D-glucose. The protein is Hexokinase-1 of Schizosaccharomyces pombe (strain 972 / ATCC 24843) (Fission yeast).